A 33-amino-acid polypeptide reads, in one-letter code: Gastrin (33 aa).

Glutamine 1 carries the post-translational modification Pyrrolidone carboxylic acid. Phenylalanine 33 carries the phenylalanine amide modification.

The protein belongs to the gastrin/cholecystokinin family.

Its subcellular location is the secreted. Its function is as follows. Gastrin stimulates the stomach mucosa to produce and secrete hydrochloric acid and the pancreas to secrete its digestive enzymes. It also stimulates smooth muscle contraction and increases blood circulation and water secretion in the stomach and intestine. The chain is Gastrin (GAST) from Cavia porcellus (Guinea pig).